The primary structure comprises 258 residues: UPF0246 protein Jann_0444 (258 aa).

This sequence belongs to the UPF0246 family.

The protein is UPF0246 protein Jann_0444 of Jannaschia sp. (strain CCS1).